A 242-amino-acid chain; its full sequence is 1-(5-phosphoribosyl)-5-[(5-phosphoribosylamino)methylideneamino] imidazole-4-carboxamide isomerase (242 aa).

Residue Asp10 is the Proton acceptor of the active site. Asp131 (proton donor) is an active-site residue.

This sequence belongs to the HisA/HisF family.

The protein localises to the cytoplasm. The enzyme catalyses 1-(5-phospho-beta-D-ribosyl)-5-[(5-phospho-beta-D-ribosylamino)methylideneamino]imidazole-4-carboxamide = 5-[(5-phospho-1-deoxy-D-ribulos-1-ylimino)methylamino]-1-(5-phospho-beta-D-ribosyl)imidazole-4-carboxamide. It participates in amino-acid biosynthesis; L-histidine biosynthesis; L-histidine from 5-phospho-alpha-D-ribose 1-diphosphate: step 4/9. This is 1-(5-phosphoribosyl)-5-[(5-phosphoribosylamino)methylideneamino] imidazole-4-carboxamide isomerase from Bifidobacterium animalis subsp. lactis (strain AD011).